Consider the following 251-residue polypeptide: Probable transcriptional regulatory protein Mflv_3828 (251 aa).

It belongs to the TACO1 family.

It localises to the cytoplasm. In Mycolicibacterium gilvum (strain PYR-GCK) (Mycobacterium gilvum (strain PYR-GCK)), this protein is Probable transcriptional regulatory protein Mflv_3828.